Reading from the N-terminus, the 310-residue chain is Imidazolonepropionase (310 aa).

Tyr42 and His75 together coordinate 4-imidazolone-5-propanoate. Tyr42 contributes to the N-formimidoyl-L-glutamate binding site. His140 contributes to the Fe(3+) binding site. Zn(2+) is bound at residue His140. A 4-imidazolone-5-propanoate-binding site is contributed by Glu143. Residue Asp215 coordinates Fe(3+). Asp215 is a binding site for Zn(2+). 2 residues coordinate N-formimidoyl-L-glutamate: Asn217 and Gly219. Residue Ser220 participates in 4-imidazolone-5-propanoate binding.

It belongs to the metallo-dependent hydrolases superfamily. HutI family. Requires Zn(2+) as cofactor. Fe(3+) is required as a cofactor.

The protein resides in the cytoplasm. The catalysed reaction is 4-imidazolone-5-propanoate + H2O = N-formimidoyl-L-glutamate. It functions in the pathway amino-acid degradation; L-histidine degradation into L-glutamate; N-formimidoyl-L-glutamate from L-histidine: step 3/3. In terms of biological role, catalyzes the hydrolytic cleavage of the carbon-nitrogen bond in imidazolone-5-propanoate to yield N-formimidoyl-L-glutamate. It is the third step in the universal histidine degradation pathway. The protein is Imidazolonepropionase (hutI) of Streptococcus gordonii.